Consider the following 203-residue polypeptide: Dual-action ribosomal maturation protein DarP (203 aa).

2 disordered regions span residues 1-31 (MTRK…SQLK) and 178-203 (NADG…DRDA). Residues 21-31 (GYDRPSKSQLK) are compositionally biased toward basic and acidic residues. Residues 188–203 (SEADDAQDDEDDDRDA) show a composition bias toward acidic residues.

It belongs to the DarP family.

It localises to the cytoplasm. In terms of biological role, member of a network of 50S ribosomal subunit biogenesis factors which assembles along the 30S-50S interface, preventing incorrect 23S rRNA structures from forming. Promotes peptidyl transferase center (PTC) maturation. In Paraburkholderia xenovorans (strain LB400), this protein is Dual-action ribosomal maturation protein DarP.